A 967-amino-acid chain; its full sequence is Phosphoenolpyruvate carboxylase (967 aa).

S10 is modified (phosphoserine). Catalysis depends on residues H171 and K601. A disordered region spans residues 915–936 (NASRLPLSRESPEATKPADELV). A compositionally biased stretch (basic and acidic residues) spans 924 to 933 (ESPEATKPAD).

Belongs to the PEPCase type 1 family. In terms of assembly, homotetramer. The cofactor is Mg(2+).

It is found in the cytoplasm. It catalyses the reaction oxaloacetate + phosphate = phosphoenolpyruvate + hydrogencarbonate. Its activity is regulated as follows. By light-reversible phosphorylation. In terms of biological role, through the carboxylation of phosphoenolpyruvate (PEP) it forms oxaloacetate, a four-carbon dicarboxylic acid source for the tricarboxylic acid cycle. In Pisum sativum (Garden pea), this protein is Phosphoenolpyruvate carboxylase.